Here is a 115-residue protein sequence, read N- to C-terminus: NADH-ubiquinone oxidoreductase chain 3 (115 aa).

3 helical membrane-spanning segments follow: residues 4–24, 55–75, and 84–104; these read ILTL…AFWL, FFLV…LLPL, and SYLT…GLAY.

It belongs to the complex I subunit 3 family. As to quaternary structure, core subunit of respiratory chain NADH dehydrogenase (Complex I) which is composed of 45 different subunits. Interacts with TMEM186. Interacts with TMEM242.

It localises to the mitochondrion inner membrane. The enzyme catalyses a ubiquinone + NADH + 5 H(+)(in) = a ubiquinol + NAD(+) + 4 H(+)(out). Its function is as follows. Core subunit of the mitochondrial membrane respiratory chain NADH dehydrogenase (Complex I) which catalyzes electron transfer from NADH through the respiratory chain, using ubiquinone as an electron acceptor. Essential for the catalytic activity of complex I. This is NADH-ubiquinone oxidoreductase chain 3 from Necromys lactens (Rufous-bellied bolo mouse).